Consider the following 297-residue polypeptide: 2-dehydropantoate 2-reductase (297 aa).

NADP(+) is bound by residues 11-16 (GAGAMG), Asn-107, and Ala-133. Asn-107 provides a ligand contact to substrate. Lys-187 (proton donor) is an active-site residue. Substrate-binding residues include Asn-191, Asn-195, Asn-205, and Ser-251. NADP(+) is bound at residue Glu-263.

This sequence belongs to the ketopantoate reductase family.

Its subcellular location is the cytoplasm. The catalysed reaction is (R)-pantoate + NADP(+) = 2-dehydropantoate + NADPH + H(+). It functions in the pathway cofactor biosynthesis; (R)-pantothenate biosynthesis; (R)-pantoate from 3-methyl-2-oxobutanoate: step 2/2. Catalyzes the NADPH-dependent reduction of ketopantoate into pantoic acid. The protein is 2-dehydropantoate 2-reductase of Listeria monocytogenes serovar 1/2a (strain ATCC BAA-679 / EGD-e).